A 175-amino-acid chain; its full sequence is Electron transport protein HydN (175 aa).

4Fe-4S ferredoxin-type domains lie at 2-32 (NRFIIADASKCIGCRTCEVACVVSHQENQDC), 48-79 (KGVNISTATVCRQCEDAPCANVCPNGAISRDK), 80-109 (GFVHVMQERCIGCKTCVVACPYGAMEVVVR), and 124-157 (DKAEANKCDLCNHREDGPACMAACPTHALICVDR). [4Fe-4S] cluster contacts are provided by Cys12, Cys15, Cys18, Cys22, Cys58, Cys61, Cys66, Cys70, Cys89, Cys92, Cys95, Cys99, Cys131, Cys134, Cys143, and Cys147.

Requires [4Fe-4S] cluster as cofactor.

Electron transport from formate to hydrogen. In Escherichia coli O157:H7, this protein is Electron transport protein HydN (hydN).